The sequence spans 217 residues: MNGRACRILQEGAAELGVEISDELVTLFSLFADELKKWNRKINLTAITGDEEIALKHFVDSLALCRLVSGDDELLDLGSGGGFPVLPLALVFPTMTAVSVDAVEKKIIFQRHAARLLGCRRFEAIHARGEDLPRMLERRFNRIVSRAFSDIPSFARMALPLLMPQGTIIAMKGRGGAEEADAARGALEEMGLTVVRVTEYRLPFSGDARTLVEIGFC.

S-adenosyl-L-methionine is bound by residues glycine 78, phenylalanine 83, 129-130 (GE), and arginine 146.

Belongs to the methyltransferase superfamily. RNA methyltransferase RsmG family.

It is found in the cytoplasm. It catalyses the reaction guanosine(527) in 16S rRNA + S-adenosyl-L-methionine = N(7)-methylguanosine(527) in 16S rRNA + S-adenosyl-L-homocysteine. In terms of biological role, specifically methylates the N7 position of guanine in position 527 of 16S rRNA. In Geobacter sulfurreducens (strain ATCC 51573 / DSM 12127 / PCA), this protein is Ribosomal RNA small subunit methyltransferase G.